Consider the following 74-residue polypeptide: Protein SOM1, mitochondrial (74 aa).

In terms of assembly, component of the mitochondrial inner membrane peptidase (IMP) complex which at least consists of IMP1, IMP2 and SOM1.

Its subcellular location is the mitochondrion inner membrane. In terms of biological role, non-catalytic component of the mitochondrial inner membrane peptidase (IMP) complex. IMP catalyzes the removal of signal peptides required for the targeting of proteins from the mitochondrial matrix, across the inner membrane, into the inter-membrane space. SOM1 facilitates cleavage of a subset of IMP substrates. This is Protein SOM1, mitochondrial (SOM1) from Saccharomyces cerevisiae (strain ATCC 204508 / S288c) (Baker's yeast).